The primary structure comprises 427 residues: Endothelin-1 receptor (427 aa).

Positions 1 to 20 (METFWLRLSFWVALVGGVIS) are cleaved as a signal peptide. Residues 21–80 (DNPESYSTNLSIHVDSVATFHGTELSFVVTTHQPTNLALPSNGSMHNYCPQQTKITSAFK) lie on the Extracellular side of the membrane. N-linked (GlcNAc...) asparagine glycosylation is found at Asn-29 and Asn-62. Residues 81–102 (YINTVISCTIFIVGMVGNATLL) traverse the membrane as a helical segment. Residues 103-112 (RIIYQNKCMR) lie on the Cytoplasmic side of the membrane. A helical membrane pass occupies residues 113-132 (NGPNALIASLALGDLIYVVI). Topologically, residues 133-159 (DLPINVFKLLAGRWPFEQNDFGVFLCK) are extracellular. An intrachain disulfide couples Cys-158 to Cys-239. Residues 160 to 181 (LFPFLQKSSVGITVLNLCALSV) form a helical membrane-spanning segment. Residues 182–205 (DRYRAVASWSRVQGIGIPLVTAIE) lie on the Cytoplasmic side of the membrane. Residues 206–229 (IVSIWILSFILAIPEAIGFVMVPF) traverse the membrane as a helical segment. Residues 230–256 (EYKGAQHRTCMLNATSKFMEFYQDVKD) are Extracellular-facing. The helical transmembrane segment at 257-278 (WWLFGFYFCMPLVCTAIFYTLM) threads the bilayer. At 279 to 306 (TCEMLNRRNGSLRIALSEHLKQRREVAK) the chain is on the cytoplasmic side. The chain crosses the membrane as a helical span at residues 307-328 (TVFCLVVIFALCWFPLHLSRIL). Topologically, residues 329-347 (KKTVYDEMDTNRCELLSFL) are extracellular. The helical transmembrane segment at 348 to 372 (LLMDYIGINLATMNSCINPIALYFV) threads the bilayer. Over 373–427 (SKKFKNCFQSCLCCCCYQSKSLMTSVPMNGTSIQWKNHEQNNHNTERSSHKDSIN) the chain is Cytoplasmic. At Ser-425 the chain carries Phosphoserine.

This sequence belongs to the G-protein coupled receptor 1 family. Endothelin receptor subfamily. EDNRA sub-subfamily. As to quaternary structure, interacts with HDAC7 and KAT5.

It is found in the cell membrane. Its function is as follows. Receptor for endothelin-1. Mediates its action by association with G proteins that activate a phosphatidylinositol-calcium second messenger system. The rank order of binding affinities for ET-A is: ET1 &gt; ET2 &gt;&gt; ET3. In Bos taurus (Bovine), this protein is Endothelin-1 receptor.